The sequence spans 811 residues: G-type lectin S-receptor-like serine/threonine-protein kinase LECRK2 (811 aa).

Positions 1–23 (MAPILFLPILQILLIYCTKSAQA) are cleaved as a signal peptide. The Bulb-type lectin domain maps to 24–153 (QLNISIGSSL…DGATKWESFG (130 aa)). The Extracellular segment spans residues 24–464 (QLNISIGSSL…DKKYWILGSS (441 aa)). Residues Asn26, Asn39, Asn59, Asn219, Asn226, Asn237, and Asn242 are each glycosylated (N-linked (GlcNAc...) asparagine). Positions 292–344 (PENICQTIQTKVGSGACGFNSYCTFDGTKNTTNCLCPQRYKFFDNERTYKGCR) constitute an EGF-like; atypical domain. 5 disulfides stabilise this stretch: Cys296/Cys314, Cys308/Cys325, Cys327/Cys343, Cys389/Cys411, and Cys393/Cys399. An N-linked (GlcNAc...) asparagine glycan is attached at Asn321. Positions 352-436 (CDLDETAAMV…LQATVLLKVP (85 aa)) constitute a PAN domain. Residues 465–485 (LFFGSSVLVNFLLIFVLLFGT) traverse the membrane as a helical segment. At 486-811 (YCSITSRKKT…DPSSYISSLA (326 aa)) the chain is on the cytoplasmic side. The region spanning 521–795 (GGFHEVLGTG…KVMQMLDGAV (275 aa)) is the Protein kinase domain. ATP contacts are provided by residues 527-535 (LGTGASGIV) and Lys551. The active-site Proton acceptor is the Asp645.

The protein belongs to the protein kinase superfamily. Ser/Thr protein kinase family.

The protein resides in the membrane. It catalyses the reaction L-seryl-[protein] + ATP = O-phospho-L-seryl-[protein] + ADP + H(+). The catalysed reaction is L-threonyl-[protein] + ATP = O-phospho-L-threonyl-[protein] + ADP + H(+). Involved in resistance against the herbivorous insect brown planthopper (N.lugens, BPH). Member of the BPH3 (BPH resistance locus 3) cluster which contains LECRK1, LECRK2 and LECRK3. The sequence is that of G-type lectin S-receptor-like serine/threonine-protein kinase LECRK2 from Oryza sativa subsp. indica (Rice).